Here is a 708-residue protein sequence, read N- to C-terminus: Capsid scaffolding protein (708 aa).

Active-site charge relay system residues include histidine 63, serine 132, and histidine 157. 3 disordered regions span residues serine 270–proline 339, histidine 455–arginine 565, and alanine 593–glutamate 620. Over residues proline 284–serine 293 the composition is skewed to low complexity. Pro residues predominate over residues serine 294–proline 311. The span at serine 326 to proline 339 shows a compositional bias: low complexity. The interval alanine 333–glycine 352 is interaction with pAP. The span at lysine 498–lysine 513 shows a compositional bias: basic residues. 2 short sequence motifs (nuclear localization signal) span residues lysine 510–threonine 515 and arginine 537–lysine 543. Residues alanine 593–threonine 615 show a composition bias toward low complexity. The segment at proline 688 to glutamate 708 is interaction with major capsid protein.

Belongs to the herpesviridae capsid scaffolding protein family. As to quaternary structure, homomultimer. Interacts with major capsid protein. In terms of assembly, exists in a monomer-dimer equilibrium with the dimer being the active species. Capsid scaffolding protein is cleaved by assemblin after formation of the spherical procapsid. As a result, the capsid obtains its mature, icosahedral shape. Cleavages occur at two or more sites: release (R-site) and maturation (M-site).

It is found in the host cytoplasm. The protein localises to the host nucleus. The catalysed reaction is Cleaves -Ala-|-Ser- and -Ala-|-Ala- bonds in the scaffold protein.. In terms of biological role, acts as a scaffold protein by binding major capsid protein in the cytoplasm, inducing the nuclear localization of both proteins. Multimerizes in the nucleus such as major capsid protein forms the icosahedral T=16 capsid. Autocatalytic cleavage releases the assembly protein, and subsequently abolishes interaction with major capsid protein. Cleavages products are evicted from the capsid before or during DNA packaging. Its function is as follows. Protease that plays an essential role in virion assembly within the nucleus. Catalyzes the cleavage of the assembly protein after formation of the spherical procapsid. By that cleavage, the capsid matures and gains its icosahedral shape. The cleavage sites seem to include -Ala-Ser-, -Ala-Ala-, as well as Ala-Thr bonds. Assemblin and cleavages products are evicted from the capsid before or during DNA packaging. Plays a major role in capsid assembly. Acts as a scaffold protein by binding major capsid protein. Multimerizes in the nucleus such as major capsid protein forms the icosahedral T=16 capsid. Cleaved by assemblin after capsid completion. The cleavages products are evicted from the capsid before or during DNA packaging. The protein is Capsid scaffolding protein (UL80) of Homo sapiens (Human).